A 619-amino-acid polypeptide reads, in one-letter code: Dihydroxy-acid dehydratase (619 aa).

Asp-81 provides a ligand contact to Mg(2+). Residue Cys-122 participates in [2Fe-2S] cluster binding. Positions 123 and 124 each coordinate Mg(2+). Lys-124 bears the N6-carboxylysine mark. Cys-201 contributes to the [2Fe-2S] cluster binding site. Position 496 (Glu-496) interacts with Mg(2+). Ser-522 serves as the catalytic Proton acceptor.

The protein belongs to the IlvD/Edd family. As to quaternary structure, homodimer. Requires [2Fe-2S] cluster as cofactor. Mg(2+) serves as cofactor.

It carries out the reaction (2R)-2,3-dihydroxy-3-methylbutanoate = 3-methyl-2-oxobutanoate + H2O. It catalyses the reaction (2R,3R)-2,3-dihydroxy-3-methylpentanoate = (S)-3-methyl-2-oxopentanoate + H2O. It participates in amino-acid biosynthesis; L-isoleucine biosynthesis; L-isoleucine from 2-oxobutanoate: step 3/4. Its pathway is amino-acid biosynthesis; L-valine biosynthesis; L-valine from pyruvate: step 3/4. Its function is as follows. Functions in the biosynthesis of branched-chain amino acids. Catalyzes the dehydration of (2R,3R)-2,3-dihydroxy-3-methylpentanoate (2,3-dihydroxy-3-methylvalerate) into 2-oxo-3-methylpentanoate (2-oxo-3-methylvalerate) and of (2R)-2,3-dihydroxy-3-methylbutanoate (2,3-dihydroxyisovalerate) into 2-oxo-3-methylbutanoate (2-oxoisovalerate), the penultimate precursor to L-isoleucine and L-valine, respectively. This chain is Dihydroxy-acid dehydratase, found in Burkholderia vietnamiensis (strain G4 / LMG 22486) (Burkholderia cepacia (strain R1808)).